Reading from the N-terminus, the 133-residue chain is Ribonuclease P protein component (133 aa).

Belongs to the RnpA family. As to quaternary structure, consists of a catalytic RNA component (M1 or rnpB) and a protein subunit.

It carries out the reaction Endonucleolytic cleavage of RNA, removing 5'-extranucleotides from tRNA precursor.. Its function is as follows. RNaseP catalyzes the removal of the 5'-leader sequence from pre-tRNA to produce the mature 5'-terminus. It can also cleave other RNA substrates such as 4.5S RNA. The protein component plays an auxiliary but essential role in vivo by binding to the 5'-leader sequence and broadening the substrate specificity of the ribozyme. This chain is Ribonuclease P protein component, found in Bartonella quintana (strain Toulouse) (Rochalimaea quintana).